The primary structure comprises 161 residues: Allophycocyanin alpha chain (161 aa).

N71 carries the post-translational modification N4-methylasparagine. Residue C81 coordinates (2R,3E)-phycocyanobilin.

It belongs to the phycobiliprotein family. In terms of assembly, heterodimer of an alpha and a beta chain. Contains one covalently linked phycocyanobilin chromophore.

Its subcellular location is the cellular thylakoid membrane. Its function is as follows. Light-harvesting photosynthetic bile pigment-protein from the phycobiliprotein complex. Allophycocyanin has a maximum absorption at approximately 650 nanometers. In Thermosynechococcus vestitus (strain NIES-2133 / IAM M-273 / BP-1), this protein is Allophycocyanin alpha chain (apcA).